A 489-amino-acid chain; its full sequence is UDP-N-acetylmuramoyl-L-alanyl-D-glutamate--2,6-diaminopimelate ligase (489 aa).

Ser-30 serves as a coordination point for UDP-N-acetyl-alpha-D-muramoyl-L-alanyl-D-glutamate. 108-114 (GTNGKTT) lines the ATP pocket. Residues Asn-149, 150 to 151 (TT), Ser-177, Gln-183, and Arg-185 contribute to the UDP-N-acetyl-alpha-D-muramoyl-L-alanyl-D-glutamate site. The residue at position 217 (Lys-217) is an N6-carboxylysine. Meso-2,6-diaminopimelate is bound by residues Arg-383, 407-410 (DNPR), Gly-459, and Glu-463. A Meso-diaminopimelate recognition motif motif is present at residues 407 to 410 (DNPR).

It belongs to the MurCDEF family. MurE subfamily. Mg(2+) serves as cofactor. In terms of processing, carboxylation is probably crucial for Mg(2+) binding and, consequently, for the gamma-phosphate positioning of ATP.

The protein resides in the cytoplasm. It carries out the reaction UDP-N-acetyl-alpha-D-muramoyl-L-alanyl-D-glutamate + meso-2,6-diaminopimelate + ATP = UDP-N-acetyl-alpha-D-muramoyl-L-alanyl-gamma-D-glutamyl-meso-2,6-diaminopimelate + ADP + phosphate + H(+). It functions in the pathway cell wall biogenesis; peptidoglycan biosynthesis. Its function is as follows. Catalyzes the addition of meso-diaminopimelic acid to the nucleotide precursor UDP-N-acetylmuramoyl-L-alanyl-D-glutamate (UMAG) in the biosynthesis of bacterial cell-wall peptidoglycan. In Geobacillus thermodenitrificans (strain NG80-2), this protein is UDP-N-acetylmuramoyl-L-alanyl-D-glutamate--2,6-diaminopimelate ligase.